Reading from the N-terminus, the 100-residue chain is Large ribosomal subunit protein bL28 (100 aa).

The interval 1–25 is disordered; sequence MTRRCDITGKSVLSGNNVSHANNKS. The segment covering 11–22 has biased composition (polar residues); sequence SVLSGNNVSHAN.

Belongs to the bacterial ribosomal protein bL28 family.

The polypeptide is Large ribosomal subunit protein bL28 (Acidiphilium cryptum (strain JF-5)).